The sequence spans 668 residues: DNA ligase (668 aa).

Residues 31-35 (DAEYD), 80-81 (SL), and Glu112 contribute to the NAD(+) site. Lys114 serves as the catalytic N6-AMP-lysine intermediate. NAD(+) is bound by residues Arg135, Glu172, Lys289, and Lys313. The Zn(2+) site is built by Cys407, Cys410, Cys425, and Cys431. The BRCT domain maps to 591 to 668 (SVPQPLAGKV…NEEQLIELLN (78 aa)).

It belongs to the NAD-dependent DNA ligase family. LigA subfamily. The cofactor is Mg(2+). Mn(2+) is required as a cofactor.

It carries out the reaction NAD(+) + (deoxyribonucleotide)n-3'-hydroxyl + 5'-phospho-(deoxyribonucleotide)m = (deoxyribonucleotide)n+m + AMP + beta-nicotinamide D-nucleotide.. Functionally, DNA ligase that catalyzes the formation of phosphodiester linkages between 5'-phosphoryl and 3'-hydroxyl groups in double-stranded DNA using NAD as a coenzyme and as the energy source for the reaction. It is essential for DNA replication and repair of damaged DNA. In Aliivibrio fischeri (strain ATCC 700601 / ES114) (Vibrio fischeri), this protein is DNA ligase.